We begin with the raw amino-acid sequence, 237 residues long: Ribonuclease PH (237 aa).

Phosphate-binding positions include Arg86 and 124-126 (GTR).

The protein belongs to the RNase PH family. Homohexameric ring arranged as a trimer of dimers.

It catalyses the reaction tRNA(n+1) + phosphate = tRNA(n) + a ribonucleoside 5'-diphosphate. In terms of biological role, phosphorolytic 3'-5' exoribonuclease that plays an important role in tRNA 3'-end maturation. Removes nucleotide residues following the 3'-CCA terminus of tRNAs; can also add nucleotides to the ends of RNA molecules by using nucleoside diphosphates as substrates, but this may not be physiologically important. Probably plays a role in initiation of 16S rRNA degradation (leading to ribosome degradation) during starvation. This is Ribonuclease PH from Shewanella pealeana (strain ATCC 700345 / ANG-SQ1).